Reading from the N-terminus, the 168-residue chain is Monothiol glutaredoxin-S7, chloroplastic (168 aa).

A chloroplast-targeting transit peptide spans 1-54 (MAATAAASVAAISPLPGASLPRPVSARVPLLPRASPPTWRLSVGSARARSTRCL). In terms of domain architecture, Glutaredoxin spans 67 to 168 (RATLDKVVGS…QETLEKAMLS (102 aa)). Lys-84 provides a ligand contact to glutathione. Residue Cys-92 coordinates [2Fe-2S] cluster. Glutathione is bound by residues Arg-121, Phe-133, and 146–147 (CD).

The protein belongs to the glutaredoxin family. CGFS subfamily.

Its subcellular location is the plastid. The protein localises to the chloroplast. Functionally, may only reduce GSH-thiol disulfides, but not protein disulfides. This Oryza sativa subsp. japonica (Rice) protein is Monothiol glutaredoxin-S7, chloroplastic (GRXS7).